The sequence spans 290 residues: Tubulin polyglutamylase complex subunit 1 (290 aa).

The interval 1-30 (MAAVEKRRQAVPPPAGFTDSGRQSVSRAAG) is disordered. A phosphoserine mark is found at serine 34 and serine 266.

In terms of assembly, part of the neuronal tubulin polyglutamylase complex which contains TPGS1, TPGS2, TTLL1, LRRC49 and NICN1. Interacts with PCM1, CSTPP1 and LRRC49.

Its subcellular location is the cytoplasm. The protein localises to the cytoskeleton. It localises to the cilium axoneme. The protein resides in the flagellum axoneme. It is found in the cilium basal body. Its subcellular location is the flagellum basal body. The protein localises to the cell projection. It localises to the axon. The protein resides in the dendrite. It is found in the microtubule organizing center. Its subcellular location is the centrosome. The protein localises to the centriolar satellite. Functionally, subunit of the tubulin polyglutamylase complex (TPGC). The complex mediates cilia and flagella polyglutamylation which is essential for their biogenesis and motility. May act in the targeting of the tubulin polyglutamylase complex. Required for the development of the spermatid flagellum. The protein is Tubulin polyglutamylase complex subunit 1 of Homo sapiens (Human).